We begin with the raw amino-acid sequence, 147 residues long: Putative pre-16S rRNA nuclease (147 aa).

The protein belongs to the YqgF nuclease family.

The protein localises to the cytoplasm. Its function is as follows. Could be a nuclease involved in processing of the 5'-end of pre-16S rRNA. The polypeptide is Putative pre-16S rRNA nuclease (Ligilactobacillus salivarius (strain UCC118) (Lactobacillus salivarius)).